The primary structure comprises 203 residues: Holliday junction branch migration complex subunit RuvA (203 aa).

Positions Met-1–Asn-64 are domain I. The segment at Asn-65–Pro-142 is domain II. Positions Ala-143 to Pro-154 are flexible linker. Residues Thr-155–Leu-203 form a domain III region.

Belongs to the RuvA family. In terms of assembly, homotetramer. Forms an RuvA(8)-RuvB(12)-Holliday junction (HJ) complex. HJ DNA is sandwiched between 2 RuvA tetramers; dsDNA enters through RuvA and exits via RuvB. An RuvB hexamer assembles on each DNA strand where it exits the tetramer. Each RuvB hexamer is contacted by two RuvA subunits (via domain III) on 2 adjacent RuvB subunits; this complex drives branch migration. In the full resolvosome a probable DNA-RuvA(4)-RuvB(12)-RuvC(2) complex forms which resolves the HJ.

It is found in the cytoplasm. In terms of biological role, the RuvA-RuvB-RuvC complex processes Holliday junction (HJ) DNA during genetic recombination and DNA repair, while the RuvA-RuvB complex plays an important role in the rescue of blocked DNA replication forks via replication fork reversal (RFR). RuvA specifically binds to HJ cruciform DNA, conferring on it an open structure. The RuvB hexamer acts as an ATP-dependent pump, pulling dsDNA into and through the RuvAB complex. HJ branch migration allows RuvC to scan DNA until it finds its consensus sequence, where it cleaves and resolves the cruciform DNA. In Salmonella agona (strain SL483), this protein is Holliday junction branch migration complex subunit RuvA.